The following is a 176-amino-acid chain: Large ribosomal subunit protein uL6 (176 aa).

It belongs to the universal ribosomal protein uL6 family. As to quaternary structure, part of the 50S ribosomal subunit.

Functionally, this protein binds to the 23S rRNA, and is important in its secondary structure. It is located near the subunit interface in the base of the L7/L12 stalk, and near the tRNA binding site of the peptidyltransferase center. The polypeptide is Large ribosomal subunit protein uL6 (Paraburkholderia phymatum (strain DSM 17167 / CIP 108236 / LMG 21445 / STM815) (Burkholderia phymatum)).